The chain runs to 98 residues: uncharacterized protein (98 aa).

This is an uncharacterized protein from Rickettsia conorii (strain ATCC VR-613 / Malish 7).